We begin with the raw amino-acid sequence, 350 residues long: Glycosyltransferase 8 domain-containing protein 2 (350 aa).

Topologically, residues 1–6 are cytoplasmic; the sequence is MALLRK. A helical; Signal-anchor for type II membrane protein membrane pass occupies residues 7-24; that stretch reads INQVLLFLLIVTLCGILY. Residues 25–349 are Lumenal-facing; it reads KKVHKGTMLR…AGIFKLHHPN (325 aa). N-linked (GlcNAc...) asparagine glycosylation occurs at Asn-234.

It belongs to the glycosyltransferase 8 family.

It is found in the membrane. This Bos taurus (Bovine) protein is Glycosyltransferase 8 domain-containing protein 2 (GLT8D2).